Consider the following 356-residue polypeptide: Cyclin-D1-binding protein 1 (356 aa).

The residue at position 2 (Ala-2) is an N-acetylalanine. Interaction with TCF3 stretches follow at residues 2 to 181 (ASST…VDFV) and 147 to 356 (ISCN…AAEL). Residues 2–187 (ASSTAAVPFL…VDFVKDAHEE (186 aa)) form an interaction with RPLP0 region. The interval 2–205 (ASSTAAVPFL…DPYSGLLNDS (204 aa)) is required for interaction with CCND1. A disordered region spans residues 198–224 (YSGLLNDSEDNSDSHSDEDGVLGLPSN). The tract at residues 236–356 (LIIPCLALVR…KALTQRAAEL (121 aa)) is interaction with RPLP0.

Belongs to the CCNDBP1 family. Interacts with CCND1 and GRAP2. May also interact with COPS5, RPLP0, SIRT6, SYF2 and TCF3. In terms of processing, phosphorylated. In terms of tissue distribution, expressed at high levels in brain, intestine, muscle and ovary and at lower levels in heart, kidney, liver, lung, spleen and testis.

It localises to the cytoplasm. The protein resides in the nucleus. In terms of biological role, may negatively regulate cell cycle progression. May act at least in part via inhibition of the cyclin-D1/CDK4 complex, thereby preventing phosphorylation of RB1 and blocking E2F-dependent transcription. May be required for hepatocyte proliferation. This chain is Cyclin-D1-binding protein 1 (Ccndbp1), found in Mus musculus (Mouse).